Consider the following 359-residue polypeptide: Phosphate acyltransferase (359 aa).

This sequence belongs to the PlsX family. In terms of assembly, homodimer. Probably interacts with PlsY.

It localises to the cytoplasm. It carries out the reaction a fatty acyl-[ACP] + phosphate = an acyl phosphate + holo-[ACP]. The protein operates within lipid metabolism; phospholipid metabolism. Catalyzes the reversible formation of acyl-phosphate (acyl-PO(4)) from acyl-[acyl-carrier-protein] (acyl-ACP). This enzyme utilizes acyl-ACP as fatty acyl donor, but not acyl-CoA. In Salmonella agona (strain SL483), this protein is Phosphate acyltransferase.